The sequence spans 60 residues: Large ribosomal subunit protein bL32 (60 aa).

The interval 1–28 (MAVQQNKKSRSARDMRRSHDALEASTLS) is disordered. A compositionally biased stretch (basic and acidic residues) spans 11–22 (SARDMRRSHDAL).

This sequence belongs to the bacterial ribosomal protein bL32 family.

This Pseudomonas savastanoi pv. phaseolicola (strain 1448A / Race 6) (Pseudomonas syringae pv. phaseolicola (strain 1448A / Race 6)) protein is Large ribosomal subunit protein bL32.